The sequence spans 121 residues: Large ribosomal subunit protein bL19 (121 aa).

Belongs to the bacterial ribosomal protein bL19 family.

Its function is as follows. This protein is located at the 30S-50S ribosomal subunit interface and may play a role in the structure and function of the aminoacyl-tRNA binding site. In Borreliella burgdorferi (strain ATCC 35210 / DSM 4680 / CIP 102532 / B31) (Borrelia burgdorferi), this protein is Large ribosomal subunit protein bL19 (rplS).